A 257-amino-acid polypeptide reads, in one-letter code: Mediator of RNA polymerase II transcription subunit 7 (257 aa).

A disordered region spans residues 33 to 74; the sequence is EWQRQQNDEEIETKQEEADDKDEKDNEKQNETQDTVPPGELR. Over residues 44-63 the composition is skewed to basic and acidic residues; the sequence is ETKQEEADDKDEKDNEKQNE.

This sequence belongs to the Mediator complex subunit 7 family. Component of the Mediator complex.

It localises to the nucleus. Component of the Mediator complex, a coactivator involved in the regulated transcription of nearly all RNA polymerase II-dependent genes. Mediator functions as a bridge to convey information from gene-specific regulatory proteins to the basal RNA polymerase II transcription machinery. Mediator is recruited to promoters by direct interactions with regulatory proteins and serves as a scaffold for the assembly of a functional preinitiation complex with RNA polymerase II and the general transcription factors. The sequence is that of Mediator of RNA polymerase II transcription subunit 7 (MED7) from Scheffersomyces stipitis (strain ATCC 58785 / CBS 6054 / NBRC 10063 / NRRL Y-11545) (Yeast).